Here is a 313-residue protein sequence, read N- to C-terminus: Glutathione synthetase (313 aa).

An ATP-grasp domain is found at 125–309 (KIFVTEFADL…IASLFWDAVE (185 aa)). 151–207 (RKEFGDIIVKPLYGNGGAGIFHLHEADRNLASLLEMFGQLFREPYIVQRYLKDVRKG) is a binding site for ATP. Residues E280 and N282 each contribute to the Mg(2+) site.

Belongs to the prokaryotic GSH synthase family. It depends on Mg(2+) as a cofactor. The cofactor is Mn(2+).

It catalyses the reaction gamma-L-glutamyl-L-cysteine + glycine + ATP = glutathione + ADP + phosphate + H(+). Its pathway is sulfur metabolism; glutathione biosynthesis; glutathione from L-cysteine and L-glutamate: step 2/2. In Mesorhizobium japonicum (strain LMG 29417 / CECT 9101 / MAFF 303099) (Mesorhizobium loti (strain MAFF 303099)), this protein is Glutathione synthetase.